The sequence spans 383 residues: F-box/kelch-repeat protein At2g29830 (383 aa).

The disordered stretch occupies residues 1 to 21 (MVVLSEIPGDPNEDNQNENPQ). The segment covering 11 to 21 (PNEDNQNENPQ) has biased composition (acidic residues). In terms of domain architecture, F-box spans 27–73 (LPILLQLPEELIASIVALIPRCHYPSLSLVSRAFRHLITSQELYVAR). 5 Kelch repeats span residues 130–178 (KMYV…IIDG), 179–224 (RIYV…FITY), 226–272 (VMQG…VVGD), 274–317 (LYAL…YTST), and 324–370 (KLVI…RDLP).

The chain is F-box/kelch-repeat protein At2g29830 from Arabidopsis thaliana (Mouse-ear cress).